The chain runs to 292 residues: GTP cyclohydrolase FolE2 (292 aa).

It belongs to the GTP cyclohydrolase IV family.

It catalyses the reaction GTP + H2O = 7,8-dihydroneopterin 3'-triphosphate + formate + H(+). The protein operates within cofactor biosynthesis; 7,8-dihydroneopterin triphosphate biosynthesis; 7,8-dihydroneopterin triphosphate from GTP: step 1/1. Functionally, converts GTP to 7,8-dihydroneopterin triphosphate. The chain is GTP cyclohydrolase FolE2 from Staphylococcus aureus (strain Mu50 / ATCC 700699).